We begin with the raw amino-acid sequence, 512 residues long: 2-isopropylmalate synthase (512 aa).

Residues 5–268 form the Pyruvate carboxyltransferase domain; it reads LIIFDTTLRD…DVGIDTQHIV (264 aa). Positions 14, 202, 204, and 239 each coordinate Mn(2+). A regulatory domain region spans residues 394 to 512; the sequence is GFVSLAQHSE…SKAERVAAQG (119 aa).

It belongs to the alpha-IPM synthase/homocitrate synthase family. LeuA type 1 subfamily. In terms of assembly, homodimer. Requires Mn(2+) as cofactor.

The protein localises to the cytoplasm. It catalyses the reaction 3-methyl-2-oxobutanoate + acetyl-CoA + H2O = (2S)-2-isopropylmalate + CoA + H(+). It participates in amino-acid biosynthesis; L-leucine biosynthesis; L-leucine from 3-methyl-2-oxobutanoate: step 1/4. Its function is as follows. Catalyzes the condensation of the acetyl group of acetyl-CoA with 3-methyl-2-oxobutanoate (2-ketoisovalerate) to form 3-carboxy-3-hydroxy-4-methylpentanoate (2-isopropylmalate). This chain is 2-isopropylmalate synthase, found in Acidovorax ebreus (strain TPSY) (Diaphorobacter sp. (strain TPSY)).